Consider the following 346-residue polypeptide: MPKVDPETQKLYDEINGLIKKFQDDHKAKADCTMQEKCGDMSDIPKIRLSSKKILKGHINKVNSVHFAGDSRHCVTGSLDGKLIIWDTWTANKVQVIPLRSAWVMTVAFSPSGNFVACGGMDNQCTVYDVNNRDASGVAKMTRELLGYEGFLSSCRFLDDTHLITGSGDMKICHWDLEKGVKTMDFNGHAGDIAGLSLSPDMNTYITGSVDKTAKLWDVREETHKQMFFGHEMDVNSVCYHPSGNGFASASEDQTARLYDIRADQQIALYEPPQKNTGFTSCALSTSGRYLLCSGIEGNIHSFDTMKVCHNGMLQGHENRITCISLSPNGMCLASTSWDQQVRLWL.

WD repeat units lie at residues 57 to 96 (GHIN…KVQV), 99 to 138 (LRSA…ASGV), 147 to 185 (GYEG…KTMD), 188 to 227 (GHAG…HKQM), 230 to 269 (GHEM…QIAL), 274 to 313 (QKNT…HNGM), and 316 to 346 (GHEN…RLWL).

Belongs to the WD repeat G protein beta family. In terms of assembly, g proteins are composed of 3 units, alpha, beta and gamma. Interacts with Ggammae/Guanine nucleotide-binding protein subunit gamma-e.

Its function is as follows. Guanine nucleotide-binding proteins (G proteins) are involved as modulators or transducers in various transmembrane signaling systems. The beta and gamma chains are required for the GTPase activity, for replacement of GDP by GTP, and for G protein-effector interaction. The polypeptide is Guanine nucleotide-binding protein subunit beta-2 (Calliphora vicina (Blue blowfly)).